Here is a 274-residue protein sequence, read N- to C-terminus: Exosome complex component Rrp42 (274 aa).

The protein belongs to the RNase PH family. Rrp42 subfamily. In terms of assembly, component of the archaeal exosome complex. Forms a hexameric ring-like arrangement composed of 3 Rrp41-Rrp42 heterodimers. The hexameric ring associates with a trimer of Rrp4 and/or Csl4 subunits.

The protein resides in the cytoplasm. Non-catalytic component of the exosome, which is a complex involved in RNA degradation. Contributes to the structuring of the Rrp41 active site. The sequence is that of Exosome complex component Rrp42 from Pyrococcus abyssi (strain GE5 / Orsay).